Consider the following 642-residue polypeptide: 1-deoxy-D-xylulose-5-phosphate synthase 2 (642 aa).

Residues H79 and 120 to 122 contribute to the thiamine diphosphate site; that span reads AHS. Position 155 (D155) interacts with Mg(2+). Thiamine diphosphate contacts are provided by residues 156 to 157, N184, Y293, and E375; that span reads GS. A Mg(2+)-binding site is contributed by N184.

It belongs to the transketolase family. DXPS subfamily. In terms of assembly, homodimer. Mg(2+) serves as cofactor. The cofactor is thiamine diphosphate.

It catalyses the reaction D-glyceraldehyde 3-phosphate + pyruvate + H(+) = 1-deoxy-D-xylulose 5-phosphate + CO2. Its pathway is metabolic intermediate biosynthesis; 1-deoxy-D-xylulose 5-phosphate biosynthesis; 1-deoxy-D-xylulose 5-phosphate from D-glyceraldehyde 3-phosphate and pyruvate: step 1/1. Catalyzes the acyloin condensation reaction between C atoms 2 and 3 of pyruvate and glyceraldehyde 3-phosphate to yield 1-deoxy-D-xylulose-5-phosphate (DXP). The polypeptide is 1-deoxy-D-xylulose-5-phosphate synthase 2 (Roseobacter denitrificans (strain ATCC 33942 / OCh 114) (Erythrobacter sp. (strain OCh 114))).